The following is a 588-amino-acid chain: Protein disulfide-isomerase-like protein of the testis (588 aa).

An N-terminal signal peptide occupies residues 1 to 20 (MELLWTPLLLVAACLSEVLG). N-linked (GlcNAc...) asparagine glycans are attached at residues Asn55, Asn157, and Asn337. In terms of domain architecture, Thioredoxin spans 385 to 448 (PVKKLVGKNF…IAKIDITAND (64 aa)). Basic and acidic residues-rich tracts occupy residues 531 to 542 (IEDTSKQDRPVK), 549 to 567 (SIRK…EREA), and 574 to 588 (EQPK…KEEL). Residues 531-588 (IEDTSKQDRPVKESPVLDSIRKPEEPERRKETAEREAAAAQPKEQPKPERKLEVKEEL) form a disordered region. The Prevents secretion from ER motif lies at 585–588 (KEEL).

It belongs to the protein disulfide isomerase family. In terms of assembly, homodimer. The homodimer is not disulfide-linked. Interacts with CLGN and ERO1A. Post-translationally, N-glycosylated. As to expression, testis-specific (at protein level).

The protein localises to the endoplasmic reticulum. In terms of biological role, probable redox-inactive chaperone involved in spermatogenesis. In Mus musculus (Mouse), this protein is Protein disulfide-isomerase-like protein of the testis (Pdilt).